Here is a 120-residue protein sequence, read N- to C-terminus: Small ribosomal subunit protein uS13 (120 aa).

Residues 92 to 120 (HRKGLPVRGQTTKNNARTRKGKKKTVGSK) form a disordered region. Residues 107-120 (ARTRKGKKKTVGSK) are compositionally biased toward basic residues.

It belongs to the universal ribosomal protein uS13 family. Part of the 30S ribosomal subunit. Forms a loose heterodimer with protein S19. Forms two bridges to the 50S subunit in the 70S ribosome.

Functionally, located at the top of the head of the 30S subunit, it contacts several helices of the 16S rRNA. In the 70S ribosome it contacts the 23S rRNA (bridge B1a) and protein L5 of the 50S subunit (bridge B1b), connecting the 2 subunits; these bridges are implicated in subunit movement. Contacts the tRNAs in the A and P-sites. This Helicobacter pylori (strain J99 / ATCC 700824) (Campylobacter pylori J99) protein is Small ribosomal subunit protein uS13.